A 239-amino-acid chain; its full sequence is UDP-2,3-diacylglucosamine hydrolase (239 aa).

5 residues coordinate Mn(2+): Asp-8, His-10, Asp-41, Asn-78, and His-113. Substrate is bound at residue 78-79 (NR). Substrate contacts are provided by Asp-121, Ser-159, Asn-163, Lys-166, and His-194. Mn(2+) is bound by residues His-194 and His-196.

Belongs to the LpxH family. Mn(2+) serves as cofactor.

It localises to the cell inner membrane. The enzyme catalyses UDP-2-N,3-O-bis[(3R)-3-hydroxytetradecanoyl]-alpha-D-glucosamine + H2O = 2-N,3-O-bis[(3R)-3-hydroxytetradecanoyl]-alpha-D-glucosaminyl 1-phosphate + UMP + 2 H(+). The protein operates within glycolipid biosynthesis; lipid IV(A) biosynthesis; lipid IV(A) from (3R)-3-hydroxytetradecanoyl-[acyl-carrier-protein] and UDP-N-acetyl-alpha-D-glucosamine: step 4/6. In terms of biological role, hydrolyzes the pyrophosphate bond of UDP-2,3-diacylglucosamine to yield 2,3-diacylglucosamine 1-phosphate (lipid X) and UMP by catalyzing the attack of water at the alpha-P atom. Involved in the biosynthesis of lipid A, a phosphorylated glycolipid that anchors the lipopolysaccharide to the outer membrane of the cell. This chain is UDP-2,3-diacylglucosamine hydrolase, found in Shewanella sp. (strain ANA-3).